The sequence spans 338 residues: Porphobilinogen deaminase (338 aa).

C265 is subject to S-(dipyrrolylmethanemethyl)cysteine.

Belongs to the HMBS family. Requires dipyrromethane as cofactor.

It catalyses the reaction 4 porphobilinogen + H2O = hydroxymethylbilane + 4 NH4(+). It functions in the pathway porphyrin-containing compound metabolism; protoporphyrin-IX biosynthesis; coproporphyrinogen-III from 5-aminolevulinate: step 2/4. Tetrapolymerization of the monopyrrole PBG into the hydroxymethylbilane pre-uroporphyrinogen in several discrete steps. The polypeptide is Porphobilinogen deaminase (HEM3) (Yarrowia lipolytica (strain CLIB 122 / E 150) (Yeast)).